The following is a 287-amino-acid chain: Ribonuclease HII (287 aa).

The region spanning 61–287 (ALQIGVDEAG…FAPVRKALES (227 aa)) is the RNase H type-2 domain. 3 residues coordinate a divalent metal cation: D67, E68, and D186.

It belongs to the RNase HII family. Requires Mn(2+) as cofactor. The cofactor is Mg(2+).

The protein resides in the cytoplasm. It carries out the reaction Endonucleolytic cleavage to 5'-phosphomonoester.. Endonuclease that specifically degrades the RNA of RNA-DNA hybrids. The sequence is that of Ribonuclease HII from Psychrobacter arcticus (strain DSM 17307 / VKM B-2377 / 273-4).